A 343-amino-acid chain; its full sequence is Aspartate carbamoyltransferase catalytic subunit (343 aa).

Residues Arg91 and Thr92 each contribute to the carbamoyl phosphate site. Lys119 is an L-aspartate binding site. Residues Arg141, His171, and Gln174 each contribute to the carbamoyl phosphate site. L-aspartate contacts are provided by Arg204 and Arg259. Carbamoyl phosphate-binding residues include Gly300 and Pro301.

Belongs to the aspartate/ornithine carbamoyltransferase superfamily. ATCase family. Heterododecamer (2C3:3R2) of six catalytic PyrB chains organized as two trimers (C3), and six regulatory PyrI chains organized as three dimers (R2).

The catalysed reaction is carbamoyl phosphate + L-aspartate = N-carbamoyl-L-aspartate + phosphate + H(+). It functions in the pathway pyrimidine metabolism; UMP biosynthesis via de novo pathway; (S)-dihydroorotate from bicarbonate: step 2/3. Its function is as follows. Catalyzes the condensation of carbamoyl phosphate and aspartate to form carbamoyl aspartate and inorganic phosphate, the committed step in the de novo pyrimidine nucleotide biosynthesis pathway. The protein is Aspartate carbamoyltransferase catalytic subunit of Burkholderia orbicola (strain MC0-3).